Here is a 211-residue protein sequence, read N- to C-terminus: Dof zinc finger protein 5 (211 aa).

Positions 37-101 (FVVAREKVEP…QRRLQDSAEA (65 aa)) are disordered. The span at 68–80 (IKREAADRDEEQR) shows a compositional bias: basic and acidic residues. A Dof-type zinc finger spans residues 109-163 (LPCPRCRSRDTKFCYFNNYNVNQPRHFCKACHRYWTAGGALRNVPVGAGRRKNRP). Positions 111, 114, 136, and 139 each coordinate Zn(2+). The tract at residues 191–211 (SPTSPSPVYTDRWPVTPDRPF) is disordered.

The protein resides in the nucleus. Its function is as follows. Transcription factor that may transactivate seed storage protein genes in developing seeds. The sequence is that of Dof zinc finger protein 5 from Oryza sativa subsp. japonica (Rice).